A 264-amino-acid chain; its full sequence is Energy-coupling factor transporter ATP-binding protein EcfA1 (264 aa).

The 233-residue stretch at 2–234 (IQVENLSFSY…DEFNPFLIKI (233 aa)) folds into the ABC transporter domain. 34–41 (GKNGSGKS) provides a ligand contact to ATP.

This sequence belongs to the ABC transporter superfamily. Energy-coupling factor EcfA family. In terms of assembly, forms a stable energy-coupling factor (ECF) transporter complex composed of 2 membrane-embedded substrate-binding proteins (S component), 2 ATP-binding proteins (A component) and 2 transmembrane proteins (T component).

It localises to the cell inner membrane. Its function is as follows. ATP-binding (A) component of a common energy-coupling factor (ECF) ABC-transporter complex. Unlike classic ABC transporters this ECF transporter provides the energy necessary to transport a number of different substrates. The protein is Energy-coupling factor transporter ATP-binding protein EcfA1 of Fusobacterium nucleatum subsp. nucleatum (strain ATCC 25586 / DSM 15643 / BCRC 10681 / CIP 101130 / JCM 8532 / KCTC 2640 / LMG 13131 / VPI 4355).